The following is a 215-amino-acid chain: MSDINNNEPAENIEQPKQEPEDGNNSMSVDEQPETSSTNLPTGDNLAPMSVESPAHLNNEDSPKSDDSRERHGSNYVIEPHLELRDMAKDKTLENFLAQMDDYSPLIPDVLLDYYLSLSGFKCVDPRLKKLLGLTAQKFISDVAQDAYQYSKIRTGSSNASSTTFGAQNFGAGGASGIGSSGRRGDRGKTVLTVDDLSAALNEYGINLKRPDFFR.

The disordered stretch occupies residues 1–77; it reads MSDINNNEPA…SRERHGSNYV (77 aa). Positions 23 to 42 are enriched in polar residues; the sequence is GNNSMSVDEQPETSSTNLPT. Basic and acidic residues predominate over residues 58 to 73; that stretch reads NNEDSPKSDDSRERHG. The 146-residue stretch at 58 to 203 folds into the Histone-fold domain; that stretch reads NNEDSPKSDD…VDDLSAALNE (146 aa).

It belongs to the TAF10 family. As to quaternary structure, component of the 1.8 MDa SAGA (Spt-Ada-Gcn5 acetyltransferase) complex, which is composed of 19 subunits tra1, spt7, taf5, ngg1/ada3, sgf73, spt20, spt8, taf12, taf6, hfi1/ada1, ubp8, gcn5, ada2, spt3, sgf29, taf10, taf9, sgf11 and sus1. The SAGA complex is composed of 4 modules, namely the HAT (histone acetyltransferase) module (gcn5, ada2, ngg1/ada3 and sgf29), the DUB (deubiquitinating) module (ubp8, sgf11, sgf73 and sus1), the core or TAF (TBP-associated factor) module (taf5, taf6, taf9, taf10 and taf12), and the Tra1 or SPT (Suppressor of Ty) module (tra1, hfi1/ada1, spt3, spt7, spt8 and spt20). The Tra1/SPT module binds activators, the core module recruits TBP (TATA-binding protein), the HAT module contains the histone H3 acetyltransferase gcn5, and the DUB module comprises the histone H2B deubiquitinase ubp8. Component of the 1.2 MDa TFIID complex, which is composed of TATA-binding protein (TBP) and the 14 TBP-associated factors (TAFs). It comprises 1 copy of each taf1, taf2, taf3, taf7, taf8, taf11, taf13, 2 copies of each taf4, taf5, taf6, taf9, taf10, taf12, and 3 copies of taf14. In TFIID, taf10 heterodimerizes with taf3 and taf8.

Its subcellular location is the nucleus. In terms of biological role, functions as a component of both the DNA-binding general transcription initiation factor complex TFIID and the transcription coactivator SAGA complex. Binding of TFIID to a promoter (with or without TATA element) is the initial step in pre-initiation complex (PIC) formation. TFIID plays a key role in the regulation of gene expression by RNA polymerase II through different activities such as transcription activator interaction, core promoter recognition and selectivity, TFIIA and TFIIB interaction, chromatin modification (histone acetylation by TAF1), facilitation of DNA opening and initiation of transcription. SAGA acts as a general cofactor required for essentially all RNA polymerase II transcription. At the promoters, SAGA is required for transcription pre-initiation complex (PIC) recruitment. It influences RNA polymerase II transcriptional activity through different activities such as TBP interaction (via core/TAF module) and promoter selectivity, interaction with transcription activators (via Tra1/SPT module), and chromatin modification through histone acetylation (via HAT module) and deubiquitination (via DUB module). SAGA preferentially acetylates histones H3 (to form H3K9ac, H3K14ac, H3K18ac and H3K23ac) and H2B and deubiquitinates histone H2B. SAGA interacts with DNA via upstream activating sequences (UASs). This is SAGA complex/transcription factor TFIID complex subunit Taf10 from Schizosaccharomyces pombe (strain 972 / ATCC 24843) (Fission yeast).